Consider the following 187-residue polypeptide: MFQKKAIVIDGKGHLLGRLASVVAKSLLSGQKIVVVRCEELNISGPLSRNKLKWADFLNLTMNTNHARGHRHGRSPSKIFWRAVRGMLPHKTPRGQAALDNMKVFEGVPAPYDKVKRVVVPSALRVVKLNTTRKYTVLSRLSQEVGWKYRAVVAKLEVQRKQRSSTYYRKAALVKAYRTQALKKFSA.

It belongs to the universal ribosomal protein uL13 family.

The protein is Large ribosomal subunit protein uL13 (rpl13a) of Dictyostelium discoideum (Social amoeba).